Consider the following 332-residue polypeptide: L-lactate dehydrogenase A chain (332 aa).

NAD(+)-binding positions include 29–57 (GAVGMACAISILMKDLADELALVDVIEDK) and Arg-99. 3 residues coordinate substrate: Arg-106, Asn-138, and Arg-169. Asn-138 is a binding site for NAD(+). His-193 acts as the Proton acceptor in catalysis. Thr-248 is a binding site for substrate.

It belongs to the LDH/MDH superfamily. LDH family. In terms of assembly, homotetramer.

It is found in the cytoplasm. It carries out the reaction (S)-lactate + NAD(+) = pyruvate + NADH + H(+). It participates in fermentation; pyruvate fermentation to lactate; (S)-lactate from pyruvate: step 1/1. In terms of biological role, interconverts simultaneously and stereospecifically pyruvate and lactate with concomitant interconversion of NADH and NAD(+). The chain is L-lactate dehydrogenase A chain (LDHA) from Pelodiscus sinensis japonicus (Chinese soft-shelled turtle).